Consider the following 227-residue polypeptide: Phosphoribosylformylglycinamidine synthase subunit PurQ (227 aa).

The Glutamine amidotransferase type-1 domain occupies Lys-2 to Asn-226. Cys-86 (nucleophile) is an active-site residue. Catalysis depends on residues His-195 and Glu-197.

As to quaternary structure, part of the FGAM synthase complex composed of 1 PurL, 1 PurQ and 2 PurS subunits.

The protein localises to the cytoplasm. It catalyses the reaction N(2)-formyl-N(1)-(5-phospho-beta-D-ribosyl)glycinamide + L-glutamine + ATP + H2O = 2-formamido-N(1)-(5-O-phospho-beta-D-ribosyl)acetamidine + L-glutamate + ADP + phosphate + H(+). It carries out the reaction L-glutamine + H2O = L-glutamate + NH4(+). It functions in the pathway purine metabolism; IMP biosynthesis via de novo pathway; 5-amino-1-(5-phospho-D-ribosyl)imidazole from N(2)-formyl-N(1)-(5-phospho-D-ribosyl)glycinamide: step 1/2. Functionally, part of the phosphoribosylformylglycinamidine synthase complex involved in the purines biosynthetic pathway. Catalyzes the ATP-dependent conversion of formylglycinamide ribonucleotide (FGAR) and glutamine to yield formylglycinamidine ribonucleotide (FGAM) and glutamate. The FGAM synthase complex is composed of three subunits. PurQ produces an ammonia molecule by converting glutamine to glutamate. PurL transfers the ammonia molecule to FGAR to form FGAM in an ATP-dependent manner. PurS interacts with PurQ and PurL and is thought to assist in the transfer of the ammonia molecule from PurQ to PurL. The protein is Phosphoribosylformylglycinamidine synthase subunit PurQ of Listeria welshimeri serovar 6b (strain ATCC 35897 / DSM 20650 / CCUG 15529 / CIP 8149 / NCTC 11857 / SLCC 5334 / V8).